Reading from the N-terminus, the 89-residue chain is uncharacterized protein (89 aa).

This is an uncharacterized protein from Sinorhizobium fredii (strain NBRC 101917 / NGR234).